The chain runs to 147 residues: Putative pre-16S rRNA nuclease (147 aa).

Belongs to the YqgF nuclease family.

It is found in the cytoplasm. Could be a nuclease involved in processing of the 5'-end of pre-16S rRNA. This is Putative pre-16S rRNA nuclease from Limosilactobacillus reuteri (strain DSM 20016) (Lactobacillus reuteri).